Consider the following 379-residue polypeptide: Protein-glutamate methylesterase/protein-glutamine glutaminase (379 aa).

The region spanning 4–121 (KILVVDDSIF…AANRQDAVAL (118 aa)) is the Response regulatory domain. Aspartate 55 carries the 4-aspartylphosphate modification. The CheB-type methylesterase domain maps to 186–379 (SGKKYRCLAI…FESHILKEMA (194 aa)). Catalysis depends on residues serine 198, histidine 225, and aspartate 323.

The protein belongs to the CheB family. In terms of processing, phosphorylated by CheA. Phosphorylation of the N-terminal regulatory domain activates the methylesterase activity.

The protein resides in the cytoplasm. It carries out the reaction [protein]-L-glutamate 5-O-methyl ester + H2O = L-glutamyl-[protein] + methanol + H(+). It catalyses the reaction L-glutaminyl-[protein] + H2O = L-glutamyl-[protein] + NH4(+). Its function is as follows. Involved in chemotaxis. Part of a chemotaxis signal transduction system that modulates chemotaxis in response to various stimuli. Catalyzes the demethylation of specific methylglutamate residues introduced into the chemoreceptors (methyl-accepting chemotaxis proteins or MCP) by CheR. Also mediates the irreversible deamidation of specific glutamine residues to glutamic acid. The sequence is that of Protein-glutamate methylesterase/protein-glutamine glutaminase from Pseudoalteromonas atlantica (strain T6c / ATCC BAA-1087).